Consider the following 913-residue polypeptide: Valine--tRNA ligase (913 aa).

Residues 48–58 carry the 'HIGH' region motif; it reads PNVTGSLHMGH. Positions 541–545 match the 'KMSKS' region motif; sequence KMSKS. Lys-544 contacts ATP. The stretch at 839-907 forms a coiled coil; that stretch reads VVDLEALVSK…IEHRLQSLGV (69 aa).

The protein belongs to the class-I aminoacyl-tRNA synthetase family. ValS type 1 subfamily. Monomer.

The protein localises to the cytoplasm. The enzyme catalyses tRNA(Val) + L-valine + ATP = L-valyl-tRNA(Val) + AMP + diphosphate. In terms of biological role, catalyzes the attachment of valine to tRNA(Val). As ValRS can inadvertently accommodate and process structurally similar amino acids such as threonine, to avoid such errors, it has a 'posttransfer' editing activity that hydrolyzes mischarged Thr-tRNA(Val) in a tRNA-dependent manner. In Thermosynechococcus vestitus (strain NIES-2133 / IAM M-273 / BP-1), this protein is Valine--tRNA ligase.